A 329-amino-acid polypeptide reads, in one-letter code: Aspartate--ammonia ligase (329 aa).

This sequence belongs to the class-II aminoacyl-tRNA synthetase family. AsnA subfamily.

It is found in the cytoplasm. The enzyme catalyses L-aspartate + NH4(+) + ATP = L-asparagine + AMP + diphosphate + H(+). The protein operates within amino-acid biosynthesis; L-asparagine biosynthesis; L-asparagine from L-aspartate (ammonia route): step 1/1. In Ureaplasma parvum serovar 3 (strain ATCC 27815 / 27 / NCTC 11736), this protein is Aspartate--ammonia ligase.